Reading from the N-terminus, the 148-residue chain is Putative nickel-responsive regulator (148 aa).

Ni(2+) is bound by residues histidine 77, histidine 88, histidine 90, and cysteine 96.

It belongs to the transcriptional regulatory CopG/NikR family. It depends on Ni(2+) as a cofactor.

Functionally, transcriptional regulator. This chain is Putative nickel-responsive regulator, found in Bradyrhizobium diazoefficiens (strain JCM 10833 / BCRC 13528 / IAM 13628 / NBRC 14792 / USDA 110).